The primary structure comprises 350 residues: Biotin synthase (350 aa).

Positions 54–278 (REIQLSTLLS…TMPQSYVRLS (225 aa)) constitute a Radical SAM core domain. Residues Cys69, Cys73, and Cys76 each contribute to the [4Fe-4S] cluster site. Residues Cys113, Cys144, Cys204, and Arg276 each coordinate [2Fe-2S] cluster.

Belongs to the radical SAM superfamily. Biotin synthase family. Homodimer. Requires [4Fe-4S] cluster as cofactor. It depends on [2Fe-2S] cluster as a cofactor.

The enzyme catalyses (4R,5S)-dethiobiotin + (sulfur carrier)-SH + 2 reduced [2Fe-2S]-[ferredoxin] + 2 S-adenosyl-L-methionine = (sulfur carrier)-H + biotin + 2 5'-deoxyadenosine + 2 L-methionine + 2 oxidized [2Fe-2S]-[ferredoxin]. Its pathway is cofactor biosynthesis; biotin biosynthesis; biotin from 7,8-diaminononanoate: step 2/2. Functionally, catalyzes the conversion of dethiobiotin (DTB) to biotin by the insertion of a sulfur atom into dethiobiotin via a radical-based mechanism. This chain is Biotin synthase, found in Neisseria meningitidis serogroup C (strain 053442).